Here is a 105-residue protein sequence, read N- to C-terminus: Large ribosomal subunit protein uL24 (105 aa).

Belongs to the universal ribosomal protein uL24 family. As to quaternary structure, part of the 50S ribosomal subunit.

In terms of biological role, one of two assembly initiator proteins, it binds directly to the 5'-end of the 23S rRNA, where it nucleates assembly of the 50S subunit. Functionally, one of the proteins that surrounds the polypeptide exit tunnel on the outside of the subunit. The protein is Large ribosomal subunit protein uL24 of Beijerinckia indica subsp. indica (strain ATCC 9039 / DSM 1715 / NCIMB 8712).